The chain runs to 301 residues: uncharacterized protein (301 aa).

9 helical membrane-spanning segments follow: residues Met-1–Ile-21, Ser-33–Tyr-53, Ala-72–Trp-92, Phe-101–Ile-121, Phe-124–Tyr-144, Val-194–Ile-214, Ile-220–Ala-240, Leu-253–Pro-273, and Glu-274–Ile-294.

It belongs to the TerC family.

The protein localises to the cell membrane. This is an uncharacterized protein from Rickettsia conorii (strain ATCC VR-613 / Malish 7).